Consider the following 252-residue polypeptide: Chitooligosaccharide deacetylase (252 aa).

Mg(2+) contacts are provided by histidine 61 and histidine 125.

It belongs to the YdjC deacetylase family. ChbG subfamily. Homodimer. Requires Mg(2+) as cofactor.

The protein resides in the cytoplasm. The catalysed reaction is N,N'-diacetylchitobiose + H2O = N-acetyl-beta-D-glucosaminyl-(1-&gt;4)-D-glucosamine + acetate. It carries out the reaction diacetylchitobiose-6'-phosphate + H2O = N'-monoacetylchitobiose-6'-phosphate + acetate. It functions in the pathway glycan degradation; chitin degradation. In terms of biological role, involved in the degradation of chitin. ChbG is essential for growth on the acetylated chitooligosaccharides chitobiose and chitotriose but is dispensable for growth on cellobiose and chitosan dimer, the deacetylated form of chitobiose. Deacetylation of chitobiose-6-P and chitotriose-6-P is necessary for both the activation of the chb promoter by the regulatory protein ChbR and the hydrolysis of phosphorylated beta-glucosides by the phospho-beta-glucosidase ChbF. Catalyzes the removal of only one acetyl group from chitobiose-6-P to yield monoacetylchitobiose-6-P, the inducer of ChbR and the substrate of ChbF. The chain is Chitooligosaccharide deacetylase from Shigella flexneri serotype 5b (strain 8401).